Reading from the N-terminus, the 871-residue chain is Alanine--tRNA ligase (871 aa).

Zn(2+)-binding residues include His-590, His-594, Cys-694, and His-698.

This sequence belongs to the class-II aminoacyl-tRNA synthetase family. Zn(2+) serves as cofactor.

It localises to the cytoplasm. It catalyses the reaction tRNA(Ala) + L-alanine + ATP = L-alanyl-tRNA(Ala) + AMP + diphosphate. Catalyzes the attachment of alanine to tRNA(Ala) in a two-step reaction: alanine is first activated by ATP to form Ala-AMP and then transferred to the acceptor end of tRNA(Ala). Also edits incorrectly charged Ser-tRNA(Ala) and Gly-tRNA(Ala) via its editing domain. This Thermoplasma acidophilum (strain ATCC 25905 / DSM 1728 / JCM 9062 / NBRC 15155 / AMRC-C165) protein is Alanine--tRNA ligase.